Reading from the N-terminus, the 366-residue chain is 5-hydroxytryptamine receptor 1F (366 aa).

At 1–24 the chain is on the extracellular side; it reads MDFLNSSDQNLTSEELLHRMPSKI. Residues Asn5 and Asn10 are each glycosylated (N-linked (GlcNAc...) asparagine). A helical membrane pass occupies residues 25 to 49; that stretch reads LVSLTLSGLALMTTTINSLVIAAII. Residues 50 to 59 lie on the Cytoplasmic side of the membrane; it reads VTRKLHHPAN. The chain crosses the membrane as a helical span at residues 60–81; that stretch reads YLICSLAVTDFLVAVLVMPFSI. Residues 82–96 are Extracellular-facing; the sequence is VYIVRESWIMGQVLC. Cys96 and Cys172 are oxidised to a cystine. A helical transmembrane segment spans residues 97–119; sequence DIWLSVDIICCTCSILHLSAIAL. Residues Asp103 and Cys107 each contribute to the serotonin site. The short motif at 120–122 is the DRY motif; important for ligand-induced conformation changes element; sequence DRY. The Cytoplasmic portion of the chain corresponds to 120–139; that stretch reads DRYRAITDAVEYARKRTPKQ. Residues 140 to 159 traverse the membrane as a helical segment; it reads AGIMITIVWIISVFISMPPL. The Extracellular portion of the chain corresponds to 160–178; sequence FWRHQGTSRDDECIIKHDH. Residues 179–202 traverse the membrane as a helical segment; it reads IVSTIYSTFGAFYIPLVLILILYY. Over 203–291 the chain is Cytoplasmic; it reads KIYKAAKTLY…KISGTRERKA (89 aa). A helical transmembrane segment spans residues 292 to 315; sequence ATTLGLILGAFVICWLPFFVKELV. Residues 316–327 are Extracellular-facing; that stretch reads VNVCEKCKISEE. Residues 328 to 350 traverse the membrane as a helical segment; that stretch reads MANFLAWLGYLNSLINPLIYTIF. An NPxxY motif; important for ligand-induced conformation changes and signaling motif is present at residues 343–347; sequence NPLIY. The Cytoplasmic portion of the chain corresponds to 351-366; the sequence is NEDFKKAFQKLVRCQY.

Belongs to the G-protein coupled receptor 1 family.

The protein resides in the cell membrane. Its function is as follows. G-protein coupled receptor for 5-hydroxytryptamine (serotonin). Also functions as a receptor for various alkaloids and psychoactive substances. Ligand binding causes a conformation change that triggers signaling via guanine nucleotide-binding proteins (G proteins) and modulates the activity of downstream effectors, such as adenylate cyclase. HTR1F is coupled to G(i)/G(o) G alpha proteins and mediates inhibitory neurotransmission by inhibiting adenylate cyclase activity. The chain is 5-hydroxytryptamine receptor 1F (HTR1F) from Cavia porcellus (Guinea pig).